The primary structure comprises 237 residues: Ribosomal RNA small subunit methyltransferase G (237 aa).

S-adenosyl-L-methionine is bound by residues Gly-78, Phe-83, 129-130 (AE), and Arg-148.

It belongs to the methyltransferase superfamily. RNA methyltransferase RsmG family.

The protein resides in the cytoplasm. Its function is as follows. Specifically methylates the N7 position of a guanine in 16S rRNA. The protein is Ribosomal RNA small subunit methyltransferase G of Streptococcus equi subsp. zooepidemicus (strain MGCS10565).